Reading from the N-terminus, the 104-residue chain is L-rhamnose mutarotase (104 aa).

Y18 is a substrate binding site. H22 serves as the catalytic Proton donor. Residues Y41 and 76 to 77 (WW) contribute to the substrate site.

Belongs to the rhamnose mutarotase family. As to quaternary structure, homodimer.

Its subcellular location is the cytoplasm. It catalyses the reaction alpha-L-rhamnose = beta-L-rhamnose. It participates in carbohydrate metabolism; L-rhamnose metabolism. In terms of biological role, involved in the anomeric conversion of L-rhamnose. The sequence is that of L-rhamnose mutarotase from Listeria monocytogenes serovar 1/2a (strain ATCC BAA-679 / EGD-e).